The following is a 361-amino-acid chain: D-alanine--D-alanine ligase (361 aa).

The ATP-grasp domain occupies 149-353 (KKLMAAEGLP…YEELLDVLVQ (205 aa)). Residue 176-231 (KKLLGLPVFVKPARGGSSIGISKVSRWEDLPAAVDLARQHDEKVIVESEIVGPEVE) coordinates ATP. The Mg(2+) site is built by D308, E320, and N322.

This sequence belongs to the D-alanine--D-alanine ligase family. Mg(2+) is required as a cofactor. It depends on Mn(2+) as a cofactor.

It is found in the cytoplasm. The catalysed reaction is 2 D-alanine + ATP = D-alanyl-D-alanine + ADP + phosphate + H(+). The protein operates within cell wall biogenesis; peptidoglycan biosynthesis. In terms of biological role, cell wall formation. The protein is D-alanine--D-alanine ligase of Corynebacterium efficiens (strain DSM 44549 / YS-314 / AJ 12310 / JCM 11189 / NBRC 100395).